The sequence spans 214 residues: GTP cyclohydrolase 1 (214 aa).

Zn(2+) contacts are provided by C108, H111, and C179.

This sequence belongs to the GTP cyclohydrolase I family. In terms of assembly, toroid-shaped homodecamer, composed of two pentamers of five dimers.

It catalyses the reaction GTP + H2O = 7,8-dihydroneopterin 3'-triphosphate + formate + H(+). The protein operates within cofactor biosynthesis; 7,8-dihydroneopterin triphosphate biosynthesis; 7,8-dihydroneopterin triphosphate from GTP: step 1/1. The polypeptide is GTP cyclohydrolase 1 (Shewanella loihica (strain ATCC BAA-1088 / PV-4)).